Consider the following 547-residue polypeptide: Chaperonin GroEL (547 aa).

Residues 30-33 (TLGP), Lys-51, 87-91 (DGTTT), Gly-415, and Asp-496 each bind ATP. The interval 528 to 547 (KEEPMPMRGSGMGGMGGMDF) is disordered. Over residues 537–547 (SGMGGMGGMDF) the composition is skewed to gly residues.

Belongs to the chaperonin (HSP60) family. As to quaternary structure, forms a cylinder of 14 subunits composed of two heptameric rings stacked back-to-back. Interacts with the co-chaperonin GroES.

It localises to the cytoplasm. The enzyme catalyses ATP + H2O + a folded polypeptide = ADP + phosphate + an unfolded polypeptide.. Together with its co-chaperonin GroES, plays an essential role in assisting protein folding. The GroEL-GroES system forms a nano-cage that allows encapsulation of the non-native substrate proteins and provides a physical environment optimized to promote and accelerate protein folding. This chain is Chaperonin GroEL, found in Rickettsia canadensis (strain McKiel).